The sequence spans 452 residues: Xaa-Pro dipeptidase 1 (452 aa).

Residues Asp247, Asp258, His338, Glu383, and Glu422 each contribute to the Mn(2+) site.

The protein belongs to the peptidase M24B family. Bacterial-type prolidase subfamily. The cofactor is Mn(2+).

It catalyses the reaction Xaa-L-Pro dipeptide + H2O = an L-alpha-amino acid + L-proline. In terms of biological role, splits dipeptides with a prolyl residue in the C-terminal position. The chain is Xaa-Pro dipeptidase 1 from Idiomarina loihiensis (strain ATCC BAA-735 / DSM 15497 / L2-TR).